The primary structure comprises 127 residues: MAEITKQDVIEYIEKMSVLELSELVKELEEKFGVSAAAPVAVAAAGPATADAAAAEEKTEFDVILKAAGANKINVIKVVRALTSLGLKEAKDLVDGAPGAVKTGVSKQEAEDAQKQLVEAGAEVEVK.

It belongs to the bacterial ribosomal protein bL12 family. As to quaternary structure, homodimer. Part of the ribosomal stalk of the 50S ribosomal subunit. Forms a multimeric L10(L12)X complex, where L10 forms an elongated spine to which 2 to 4 L12 dimers bind in a sequential fashion. Binds GTP-bound translation factors.

In terms of biological role, forms part of the ribosomal stalk which helps the ribosome interact with GTP-bound translation factors. Is thus essential for accurate translation. The chain is Large ribosomal subunit protein bL12 from Pelobacter propionicus (strain DSM 2379 / NBRC 103807 / OttBd1).